We begin with the raw amino-acid sequence, 240 residues long: Small ribosomal subunit protein eS4 (240 aa).

The S4 RNA-binding domain maps to 37–99 (VPLVVLLRDV…RGEFFRVFPD (63 aa)).

Belongs to the eukaryotic ribosomal protein eS4 family.

This Halorubrum lacusprofundi (strain ATCC 49239 / DSM 5036 / JCM 8891 / ACAM 34) protein is Small ribosomal subunit protein eS4.